A 501-amino-acid chain; its full sequence is Cytochrome P450 2J4 (501 aa).

A run of 2 helical transmembrane segments spans residues 12–32 (IWAA…LLLA) and 77–97 (NIFS…LPLI). C447 lines the heme pocket.

The protein belongs to the cytochrome P450 family. Heme serves as cofactor. In terms of tissue distribution, expressed in small intestinal enterocytes (at protein level). In the intestinal crypt, expressed at higher levels in the mature villous cells than in undifferentiated crypt cells (at protein level). Expressed in liver, kidney, lung, and olfactory mucosa (at protein level).

It localises to the endoplasmic reticulum membrane. The protein resides in the microsome membrane. It catalyses the reaction an organic molecule + reduced [NADPH--hemoprotein reductase] + O2 = an alcohol + oxidized [NADPH--hemoprotein reductase] + H2O + H(+). The enzyme catalyses (5Z,8Z,11Z,14Z)-eicosatetraenoate + reduced [NADPH--hemoprotein reductase] + O2 = 19-hydroxy-(5Z,8Z,11Z,14Z)-eicosatetraenoate + oxidized [NADPH--hemoprotein reductase] + H2O + H(+). It carries out the reaction all-trans-retinal + reduced [NADPH--hemoprotein reductase] + O2 = all-trans-retinoate + oxidized [NADPH--hemoprotein reductase] + H2O + 2 H(+). The catalysed reaction is 9-cis-retinal + reduced [NADPH--hemoprotein reductase] + O2 = 9-cis-retinoate + oxidized [NADPH--hemoprotein reductase] + H2O + 2 H(+). Its pathway is lipid metabolism; arachidonate metabolism. It functions in the pathway cofactor metabolism; retinol metabolism. In terms of biological role, a cytochrome P450 monooxygenase that may play a major role in intestinal retinoid metabolism. Catalyzes the oxidative transformation of all-trans retinal and 9-cis-retinal to the corresponding active forms all-trans and 9-cis retinoic acids. Catalyzes the hydroxylation of carbon-hydrogen bonds. Hydroxylates arachidonic acid predominantly at the omega-1 position. Mechanistically, uses molecular oxygen inserting one oxygen atom into a substrate, and reducing the second into a water molecule, with two electrons provided by NADPH via cytochrome P450 reductase (CPR; NADPH--hemoprotein reductase). This chain is Cytochrome P450 2J4, found in Rattus norvegicus (Rat).